The chain runs to 227 residues: UPF0758 protein Psyc_1834 (227 aa).

The MPN domain maps to 102–224 (GLGRSQMVKD…TLSYAENCLA (123 aa)). Residues histidine 173, histidine 175, and aspartate 186 each coordinate Zn(2+). The JAMM motif signature appears at 173 to 186 (HNHPHTDATPSTAD).

Belongs to the UPF0758 family.

This chain is UPF0758 protein Psyc_1834, found in Psychrobacter arcticus (strain DSM 17307 / VKM B-2377 / 273-4).